The following is a 301-amino-acid chain: GTPase Era (301 aa).

In terms of domain architecture, Era-type G spans 7 to 175; it reads YCGFIAIVGR…AAIVRKHLPE (169 aa). The segment at 15 to 22 is G1; sequence GRPNVGKS. 15 to 22 is a GTP binding site; sequence GRPNVGKS. Residues 41 to 45 form a G2 region; the sequence is QTTRH. Residues 62–65 form a G3 region; it reads DTPG. GTP contacts are provided by residues 62–66 and 124–127; these read DTPGL and NKVD. The interval 124–127 is G4; the sequence is NKVD. The segment at 154–156 is G5; it reads ISA. Residues 206-283 enclose the KH type-2 domain; it reads LGAELPYSVT…HLELWVKVKS (78 aa).

Belongs to the TRAFAC class TrmE-Era-EngA-EngB-Septin-like GTPase superfamily. Era GTPase family. In terms of assembly, monomer.

Its subcellular location is the cytoplasm. The protein localises to the cell inner membrane. Functionally, an essential GTPase that binds both GDP and GTP, with rapid nucleotide exchange. Plays a role in 16S rRNA processing and 30S ribosomal subunit biogenesis and possibly also in cell cycle regulation and energy metabolism. In Shigella dysenteriae serotype 1 (strain Sd197), this protein is GTPase Era.